The chain runs to 131 residues: MAQIPARGNYSRQLTCKQAGDAWEAAARRWLESKGLRFIAANVRVRGGEIDLIMRDGKTTVFVEVRYRRSGLYGGAAASVTRSKQHKLLHTAHLWLARQNGSFDTVDCRFDVLAFTGNEIEWFRDAFNDHS.

The protein belongs to the UPF0102 family.

The chain is UPF0102 protein YraN from Salmonella arizonae (strain ATCC BAA-731 / CDC346-86 / RSK2980).